The following is a 69-amino-acid chain: ATP synthase F(0) complex subunit e, mitochondrial (69 aa).

Lys-34 is subject to N6-acetyllysine.

The protein belongs to the ATPase e subunit family. In terms of assembly, component of the ATP synthase complex composed at least of ATP5F1A/subunit alpha, ATP5F1B/subunit beta, ATP5MC1/subunit c (homooctomer), MT-ATP6/subunit a, MT-ATP8/subunit 8, ATP5ME/subunit e, ATP5MF/subunit f, ATP5MG/subunit g, ATP5MK/subunit k, ATP5MJ/subunit j, ATP5F1C/subunit gamma, ATP5F1D/subunit delta, ATP5F1E/subunit epsilon, ATP5PF/subunit F6, ATP5PB/subunit b, ATP5PD/subunit d, ATP5PO/subunit OSCP. ATP synthase complex consists of a soluble F(1) head domain (subunits alpha(3) and beta(3)) - the catalytic core - and a membrane F(0) domain - the membrane proton channel (subunits c, a, 8, e, f, g, k and j). These two domains are linked by a central stalk (subunits gamma, delta, and epsilon) rotating inside the F1 region and a stationary peripheral stalk (subunits F6, b, d, and OSCP).

The protein resides in the mitochondrion. It is found in the mitochondrion inner membrane. Functionally, subunit e, of the mitochondrial membrane ATP synthase complex (F(1)F(0) ATP synthase or Complex V) that produces ATP from ADP in the presence of a proton gradient across the membrane which is generated by electron transport complexes of the respiratory chain. ATP synthase complex consist of a soluble F(1) head domain - the catalytic core - and a membrane F(1) domain - the membrane proton channel. These two domains are linked by a central stalk rotating inside the F(1) region and a stationary peripheral stalk. During catalysis, ATP synthesis in the catalytic domain of F(1) is coupled via a rotary mechanism of the central stalk subunits to proton translocation. In vivo, can only synthesize ATP although its ATP hydrolase activity can be activated artificially in vitro. Part of the complex F(0) domain. This chain is ATP synthase F(0) complex subunit e, mitochondrial, found in Cricetulus longicaudatus (Long-tailed dwarf hamster).